Here is a 209-residue protein sequence, read N- to C-terminus: Octanoyltransferase (209 aa).

The BPL/LPL catalytic domain maps to 30 to 209 (DHKPEIIYLV…IQTEFNKIFK (180 aa)). Substrate-binding positions include 69-76 (RGGKFTFH), 143-145 (AIG), and 156-158 (GVA). Residue Cys174 is the Acyl-thioester intermediate of the active site.

It belongs to the LipB family.

It is found in the cytoplasm. It catalyses the reaction octanoyl-[ACP] + L-lysyl-[protein] = N(6)-octanoyl-L-lysyl-[protein] + holo-[ACP] + H(+). It functions in the pathway protein modification; protein lipoylation via endogenous pathway; protein N(6)-(lipoyl)lysine from octanoyl-[acyl-carrier-protein]: step 1/2. Catalyzes the transfer of endogenously produced octanoic acid from octanoyl-acyl-carrier-protein onto the lipoyl domains of lipoate-dependent enzymes. Lipoyl-ACP can also act as a substrate although octanoyl-ACP is likely to be the physiological substrate. This Rickettsia conorii (strain ATCC VR-613 / Malish 7) protein is Octanoyltransferase.